The chain runs to 383 residues: Acetylornithine deacetylase (383 aa).

His-80 provides a ligand contact to Zn(2+). The active site involves Asp-82. Residue Asp-112 participates in Zn(2+) binding. Glu-144 is a catalytic residue. The Zn(2+) site is built by Glu-145, Glu-169, and His-355.

This sequence belongs to the peptidase M20A family. ArgE subfamily. As to quaternary structure, homodimer. It depends on Zn(2+) as a cofactor. Co(2+) is required as a cofactor. Glutathione serves as cofactor.

Its subcellular location is the cytoplasm. The catalysed reaction is N(2)-acetyl-L-ornithine + H2O = L-ornithine + acetate. It functions in the pathway amino-acid biosynthesis; L-arginine biosynthesis; L-ornithine from N(2)-acetyl-L-ornithine (linear): step 1/1. Its function is as follows. Catalyzes the hydrolysis of the amide bond of N(2)-acetylated L-amino acids. Cleaves the acetyl group from N-acetyl-L-ornithine to form L-ornithine, an intermediate in L-arginine biosynthesis pathway, and a branchpoint in the synthesis of polyamines. The protein is Acetylornithine deacetylase of Escherichia coli O7:K1 (strain IAI39 / ExPEC).